Consider the following 149-residue polypeptide: Transthyretin (149 aa).

A signal peptide spans 1-20 (MAFHSLLLLCLAGLAFVSET). Cys-32 is subject to Sulfocysteine. Lys-37 provides a ligand contact to L-thyroxine. Glu-64 carries the post-translational modification 4-carboxyglutamate. The L-thyroxine site is built by Glu-76 and Ser-139.

Belongs to the transthyretin family. Homotetramer. Dimer of dimers. In the homotetramer, subunits assemble around a central channel that can accommodate two ligand molecules. Interacts with RBP4. Post-translationally, sulfonation of the reactive cysteine Cys-32 enhances the stability of the native conformation of TTR, avoiding misassembly of the protein leading to amyloid formation.

The protein resides in the secreted. Its function is as follows. Thyroid hormone-binding protein. Probably transports thyroxine from the bloodstream to the brain. This Notamacropus eugenii (Tammar wallaby) protein is Transthyretin (TTR).